A 369-amino-acid polypeptide reads, in one-letter code: Xylene/toluene monooxygenase hydroxylase component XylM (369 aa).

Helical transmembrane passes span 8-28 (LIPV…YWVW), 60-80 (LTQY…VFGV), and 91-111 (LQVA…TLPV). Fe cation is bound by residues His-113, His-117, His-143, His-147, and His-148. A helical membrane pass occupies residues 207-227 (VALLLALPGLVSYLGGPALGL). 3 residues coordinate Fe cation: His-282, His-285, and His-286. Residues 305-325 (MPSLFVCFLLGLIPPLWFALI) form a helical membrane-spanning segment.

The protein belongs to the fatty acid desaturase type 1 family. AlkB subfamily. As to quaternary structure, the xylene/toluene monooxygenase is composed of two subunits: the electron transfer component XylA and the hydroxylase component XylM. Fe(2+) is required as a cofactor.

It is found in the cell inner membrane. The catalysed reaction is m-xylene + 2 reduced [2Fe-2S]-[ferredoxin] + O2 + 2 H(+) = 3-methylbenzyl alcohol + 2 oxidized [2Fe-2S]-[ferredoxin] + H2O. The enzyme catalyses p-xylene + 2 reduced [2Fe-2S]-[ferredoxin] + O2 + 2 H(+) = 4-methylbenzyl alcohol + 2 oxidized [2Fe-2S]-[ferredoxin] + H2O. It carries out the reaction toluene + 2 reduced [2Fe-2S]-[ferredoxin] + O2 + 2 H(+) = benzyl alcohol + 2 oxidized [2Fe-2S]-[ferredoxin] + H2O. Functionally, component of a monooxygenase that catalyzes the first step in the degradation of xylenes and toluenes. XylM catalyzes the hydroxylation of the methyl side chain of xylenes and toluenes. The electrons are provided by the electron transfer component XylA. The best substrates are m-xylene and p-xylene, followed by toluene. Shows weak activity with o-xylene. In vitro, is also active with substituted compounds, such as chlorotoluenes. Cannot use benzyl alcohol. The protein is Xylene/toluene monooxygenase hydroxylase component XylM of Pseudomonas putida (Arthrobacter siderocapsulatus).